The primary structure comprises 265 residues: Nitrogenase iron protein 2 (265 aa).

8–15 (GKGGIGKS) is an ATP binding site. Cysteine 91 contributes to the [4Fe-4S] cluster binding site. Arginine 94 bears the ADP-ribosylarginine; by dinitrogenase reductase ADP-ribosyltransferase mark. Residue cysteine 126 coordinates [4Fe-4S] cluster.

It belongs to the NifH/BchL/ChlL family. As to quaternary structure, homodimer. The cofactor is [4Fe-4S] cluster. Post-translationally, the reversible ADP-ribosylation of Arg-94 inactivates the nitrogenase reductase and regulates nitrogenase activity.

The enzyme catalyses N2 + 8 reduced [2Fe-2S]-[ferredoxin] + 16 ATP + 16 H2O = H2 + 8 oxidized [2Fe-2S]-[ferredoxin] + 2 NH4(+) + 16 ADP + 16 phosphate + 6 H(+). Functionally, the key enzymatic reactions in nitrogen fixation are catalyzed by the nitrogenase complex, which has 2 components: the iron protein and the molybdenum-iron protein. The chain is Nitrogenase iron protein 2 (nifH2) from Methanothermobacter thermautotrophicus (strain ATCC 29096 / DSM 1053 / JCM 10044 / NBRC 100330 / Delta H) (Methanobacterium thermoautotrophicum).